The chain runs to 327 residues: Probable cell division protein WhiA (327 aa).

Residues 275-308 constitute a DNA-binding region (H-T-H motif); the sequence is SLEELGRLADPQMTKDAVAGRIRRLLTTADKRAR.

Belongs to the WhiA family.

Its function is as follows. Involved in cell division and chromosome segregation. In Corynebacterium efficiens (strain DSM 44549 / YS-314 / AJ 12310 / JCM 11189 / NBRC 100395), this protein is Probable cell division protein WhiA.